The following is a 215-amino-acid chain: Adenylate kinase (215 aa).

An ATP-binding site is contributed by 10–15; sequence GAGKGT. The segment at 30–59 is NMP; that stretch reads STGDMLRAAVKAGTELGLKAKSVMDAGGLV. Residues Thr31, Arg36, 57–59, 85–88, and Gln92 each bind AMP; these read GLV and GFPR. The interval 122–159 is LID; it reads GRRVHPASGRVYHTEYNPPKVAGKDDVSGEELVQREDD. Residues Arg123 and 132–133 each bind ATP; that span reads VY. The AMP site is built by Arg156 and Arg167. Gly201 contributes to the ATP binding site.

This sequence belongs to the adenylate kinase family. As to quaternary structure, monomer.

It is found in the cytoplasm. It catalyses the reaction AMP + ATP = 2 ADP. It participates in purine metabolism; AMP biosynthesis via salvage pathway; AMP from ADP: step 1/1. Functionally, catalyzes the reversible transfer of the terminal phosphate group between ATP and AMP. Plays an important role in cellular energy homeostasis and in adenine nucleotide metabolism. The chain is Adenylate kinase from Ectopseudomonas mendocina (strain ymp) (Pseudomonas mendocina).